The primary structure comprises 158 residues: 18.2 kDa class I heat shock protein (158 aa).

A sHSP domain is found at Glu44–Gly158.

It belongs to the small heat shock protein (HSP20) family. As to quaternary structure, forms oligomeric structures.

Its subcellular location is the cytoplasm. This Medicago sativa (Alfalfa) protein is 18.2 kDa class I heat shock protein (HSP18.2).